A 448-amino-acid polypeptide reads, in one-letter code: Trigger factor (448 aa).

The PPIase FKBP-type domain occupies 172–257; that stretch reads GDRVTVDFVG…MKKVEWPHLP (86 aa).

It belongs to the FKBP-type PPIase family. Tig subfamily.

The protein localises to the cytoplasm. It catalyses the reaction [protein]-peptidylproline (omega=180) = [protein]-peptidylproline (omega=0). Its function is as follows. Involved in protein export. Acts as a chaperone by maintaining the newly synthesized protein in an open conformation. Functions as a peptidyl-prolyl cis-trans isomerase. The chain is Trigger factor from Burkholderia multivorans (strain ATCC 17616 / 249).